We begin with the raw amino-acid sequence, 292 residues long: ATP synthase gamma chain (292 aa).

It belongs to the ATPase gamma chain family. As to quaternary structure, F-type ATPases have 2 components, CF(1) - the catalytic core - and CF(0) - the membrane proton channel. CF(1) has five subunits: alpha(3), beta(3), gamma(1), delta(1), epsilon(1). CF(0) has three main subunits: a, b and c.

Its subcellular location is the cell inner membrane. Functionally, produces ATP from ADP in the presence of a proton gradient across the membrane. The gamma chain is believed to be important in regulating ATPase activity and the flow of protons through the CF(0) complex. This is ATP synthase gamma chain from Chlorobaculum parvum (strain DSM 263 / NCIMB 8327) (Chlorobium vibrioforme subsp. thiosulfatophilum).